Reading from the N-terminus, the 144-residue chain is Alpha-crystallin (144 aa).

A sHSP domain is found at 33–143 (PTFDTRLMRL…TEKHIQIRST (111 aa)).

Belongs to the small heat shock protein (HSP20) family.

It is found in the secreted. It localises to the cell wall. The protein localises to the cytoplasm. Functionally, acts as a chaperone. The sequence is that of Alpha-crystallin (hspX) from Mycobacterium bovis (strain ATCC BAA-935 / AF2122/97).